The sequence spans 845 residues: Translation initiation factor IF-2 (845 aa).

Positions 1 to 260 (MSDEQDKPTL…HMTSSGPREK (260 aa)) are disordered. The segment covering 68–81 (APAPAPAAPRPAAP) has biased composition (pro residues). A compositionally biased stretch (basic and acidic residues) spans 101 to 140 (REAEEARMAALEENRRREEAERARAAEEERARAEKREEQA). Low complexity-rich tracts occupy residues 141–166 (ATKA…APPA) and 173–191 (TAAR…RFTP). The span at 194–215 (ALKRPEPKRPEPKASRGGENRR) shows a compositional bias: basic and acidic residues. The tr-type G domain occupies 344–514 (PRAPVVTIMG…ALQAEIMELK (171 aa)). Residues 353–360 (GHVDHGKT) form a G1 region. 353–360 (GHVDHGKT) contributes to the GTP binding site. The segment at 378–382 (GITQH) is G2. Residues 400–403 (DTPG) form a G3 region. GTP contacts are provided by residues 400–404 (DTPGH) and 454–457 (NKVD). Residues 454 to 457 (NKVD) form a G4 region. The interval 490-492 (SAL) is G5.

This sequence belongs to the TRAFAC class translation factor GTPase superfamily. Classic translation factor GTPase family. IF-2 subfamily.

The protein localises to the cytoplasm. Its function is as follows. One of the essential components for the initiation of protein synthesis. Protects formylmethionyl-tRNA from spontaneous hydrolysis and promotes its binding to the 30S ribosomal subunits. Also involved in the hydrolysis of GTP during the formation of the 70S ribosomal complex. In Sphingopyxis alaskensis (strain DSM 13593 / LMG 18877 / RB2256) (Sphingomonas alaskensis), this protein is Translation initiation factor IF-2.